Reading from the N-terminus, the 516-residue chain is GMP synthase [glutamine-hydrolyzing] (516 aa).

In terms of domain architecture, Glutamine amidotransferase type-1 spans 7-203 (SVIVLDFGSQ…LIDIAGITPD (197 aa)). Catalysis depends on Cys-84, which acts as the Nucleophile. Catalysis depends on residues His-177 and Glu-179. The 188-residue stretch at 204 to 391 (WSPKSFIQHQ…LGIAEDILMR (188 aa)) folds into the GMPS ATP-PPase domain. Residue 231–237 (SGGVDST) participates in ATP binding.

Homodimer.

It carries out the reaction XMP + L-glutamine + ATP + H2O = GMP + L-glutamate + AMP + diphosphate + 2 H(+). It participates in purine metabolism; GMP biosynthesis; GMP from XMP (L-Gln route): step 1/1. Functionally, catalyzes the synthesis of GMP from XMP. The polypeptide is GMP synthase [glutamine-hydrolyzing] (Chlorobaculum tepidum (strain ATCC 49652 / DSM 12025 / NBRC 103806 / TLS) (Chlorobium tepidum)).